Here is a 70-residue protein sequence, read N- to C-terminus: MGLIAAAIAIGLSALGAGIGNGLIVSRTVEGVARQPEARGQLMSIMFIGIGLVEALPIIGVVIAFMTLFQ.

2 consecutive transmembrane segments (helical) span residues 4-24 (IAAAIAIGLSALGAGIGNGLI) and 45-65 (IMFIGIGLVEALPIIGVVIAF).

The protein belongs to the ATPase C chain family. F-type ATPases have 2 components, F(1) - the catalytic core - and F(0) - the membrane proton channel. F(1) has five subunits: alpha(3), beta(3), gamma(1), delta(1), epsilon(1). F(0) has three main subunits: a(1), b(2) and c(10-14). The alpha and beta chains form an alternating ring which encloses part of the gamma chain. F(1) is attached to F(0) by a central stalk formed by the gamma and epsilon chains, while a peripheral stalk is formed by the delta and b chains.

It localises to the cell membrane. Functionally, f(1)F(0) ATP synthase produces ATP from ADP in the presence of a proton or sodium gradient. F-type ATPases consist of two structural domains, F(1) containing the extramembraneous catalytic core and F(0) containing the membrane proton channel, linked together by a central stalk and a peripheral stalk. During catalysis, ATP synthesis in the catalytic domain of F(1) is coupled via a rotary mechanism of the central stalk subunits to proton translocation. In terms of biological role, key component of the F(0) channel; it plays a direct role in translocation across the membrane. A homomeric c-ring of between 10-14 subunits forms the central stalk rotor element with the F(1) delta and epsilon subunits. This Staphylococcus haemolyticus (strain JCSC1435) protein is ATP synthase subunit c.